The primary structure comprises 385 residues: Palmitoyl-[acyl-carrier-protein] 4-desaturase, chloroplastic (385 aa).

The transit peptide at 1–36 (MAMKLNALMTLQCPKRNMFTRIAPPQAGRVRSKVSM) directs the protein to the chloroplast. Fe cation contacts are provided by E126, E164, H167, E217, E250, and H253.

This sequence belongs to the fatty acid desaturase type 2 family. As to quaternary structure, homodimer. The cofactor is Fe(2+). As to expression, found only in tissues which synthesize petroselinic acid, such as developing seeds.

The protein resides in the plastid. It is found in the chloroplast. The catalysed reaction is hexadecanoyl-[ACP] + 2 reduced [2Fe-2S]-[ferredoxin] + O2 + 2 H(+) = (4Z)-hexadecenoyl-[ACP] + 2 oxidized [2Fe-2S]-[ferredoxin] + 2 H2O. Functionally, converts palmitoyl-ACP to (4Z)-hexadec-4-enoyl-ACP by introduction of a cis double bond between carbons 4 and 5 of the acyl chain. The sequence is that of Palmitoyl-[acyl-carrier-protein] 4-desaturase, chloroplastic from Coriandrum sativum (Coriander).